A 390-amino-acid polypeptide reads, in one-letter code: GTPase Obg (390 aa).

An Obg domain is found at 1–159; it reads MKFVDEAAIL…RDILLELLLL (159 aa). An OBG-type G domain is found at 160–333; that stretch reads ADVGMLGLPN…LCWDVMKFIN (174 aa). GTP contacts are provided by residues 166–173, 191–195, 213–216, 283–286, and 314–316; these read GLPNAGKS, FTTLV, DIPG, NKID, and SAV. Mg(2+) contacts are provided by S173 and T193. The segment covering 366-384 has biased composition (acidic residues); it reads AEADDDWDDDWDEEDDEGV. Residues 366-390 are disordered; that stretch reads AEADDDWDDDWDEEDDEGVEIIYQK.

It belongs to the TRAFAC class OBG-HflX-like GTPase superfamily. OBG GTPase family. As to quaternary structure, monomer. Mg(2+) is required as a cofactor.

It is found in the cytoplasm. Functionally, an essential GTPase which binds GTP, GDP and possibly (p)ppGpp with moderate affinity, with high nucleotide exchange rates and a fairly low GTP hydrolysis rate. Plays a role in control of the cell cycle, stress response, ribosome biogenesis and in those bacteria that undergo differentiation, in morphogenesis control. This Serratia proteamaculans (strain 568) protein is GTPase Obg.